The sequence spans 210 residues: Cell division protein SepF (210 aa).

Positions 13-78 (GFGEPTGYDY…VTSTAMNPPM (66 aa)) are disordered. Over residues 22 to 31 (YDYDEMEGDD) the composition is skewed to acidic residues. Over residues 47–60 (RSEEPHPRPSEPEM) the composition is skewed to basic and acidic residues. The segment covering 64–78 (VNTSAVTSTAMNPPM) has biased composition (polar residues).

This sequence belongs to the SepF family. As to quaternary structure, homodimer. Interacts with FtsZ.

It is found in the cytoplasm. Cell division protein that is part of the divisome complex and is recruited early to the Z-ring. Probably stimulates Z-ring formation, perhaps through the cross-linking of FtsZ protofilaments. Its function overlaps with FtsA. The chain is Cell division protein SepF from Cyanothece sp. (strain PCC 7425 / ATCC 29141).